Reading from the N-terminus, the 373-residue chain is Glutamate 5-kinase (373 aa).

K16 serves as a coordination point for ATP. Substrate-binding residues include S56, D143, and N155. An ATP-binding site is contributed by 175-176 (TD). Residues 281-359 (RGRLTLDDGA…SRIDSLLGYK (79 aa)) enclose the PUA domain.

This sequence belongs to the glutamate 5-kinase family.

Its subcellular location is the cytoplasm. The enzyme catalyses L-glutamate + ATP = L-glutamyl 5-phosphate + ADP. Its pathway is amino-acid biosynthesis; L-proline biosynthesis; L-glutamate 5-semialdehyde from L-glutamate: step 1/2. In terms of biological role, catalyzes the transfer of a phosphate group to glutamate to form L-glutamate 5-phosphate. This Saccharophagus degradans (strain 2-40 / ATCC 43961 / DSM 17024) protein is Glutamate 5-kinase.